A 570-amino-acid polypeptide reads, in one-letter code: Sulfite reductase [NADPH] hemoprotein beta-component (570 aa).

[4Fe-4S] cluster-binding residues include cysteine 434, cysteine 440, cysteine 479, and cysteine 483. Residue cysteine 483 coordinates siroheme.

Belongs to the nitrite and sulfite reductase 4Fe-4S domain family. In terms of assembly, alpha(8)-beta(8). The alpha component is a flavoprotein, the beta component is a hemoprotein. Siroheme serves as cofactor. [4Fe-4S] cluster is required as a cofactor.

It carries out the reaction hydrogen sulfide + 3 NADP(+) + 3 H2O = sulfite + 3 NADPH + 4 H(+). Its pathway is sulfur metabolism; hydrogen sulfide biosynthesis; hydrogen sulfide from sulfite (NADPH route): step 1/1. Its function is as follows. Component of the sulfite reductase complex that catalyzes the 6-electron reduction of sulfite to sulfide. This is one of several activities required for the biosynthesis of L-cysteine from sulfate. The protein is Sulfite reductase [NADPH] hemoprotein beta-component of Enterobacter sp. (strain 638).